Consider the following 395-residue polypeptide: Isoafricanol synthase (395 aa).

D95, N246, S250, and E254 together coordinate Mg(2+). The span at 346–357 shows a compositional bias: basic and acidic residues; the sequence is TEAVSGGRERPW. The segment at 346–395 is disordered; the sequence is TEAVSGGRERPWARLTGAEDLIRAGRGAPPPPGSGPDTRQPMPSEPSQLA.

It belongs to the terpene synthase family. It depends on Mg(2+) as a cofactor.

It catalyses the reaction (2E,6E)-farnesyl diphosphate + H2O = (+)-isoafricanol + diphosphate. Its function is as follows. Catalyzes the cyclization of farnesyl diphosphate (FPP) to isoafricanol. This is Isoafricanol synthase from Streptomyces malaysiensis.